The chain runs to 362 residues: Porin Omp2b (362 aa).

Positions 1 to 22 (MNIKSLLLGSAAALVAASGAQA) are cleaved as a signal peptide.

This sequence belongs to the alphaproteobacteria porin family. Homotrimer.

Its subcellular location is the cell outer membrane. Forms passive diffusion pores that allow small molecular weight hydrophilic materials across the outer membrane. The polypeptide is Porin Omp2b (omp2b) (Brucella neotomae).